The chain runs to 171 residues: Large ribosomal subunit protein uL10 (171 aa).

It belongs to the universal ribosomal protein uL10 family. In terms of assembly, part of the ribosomal stalk of the 50S ribosomal subunit. The N-terminus interacts with L11 and the large rRNA to form the base of the stalk. The C-terminus forms an elongated spine to which L12 dimers bind in a sequential fashion forming a multimeric L10(L12)X complex.

In terms of biological role, forms part of the ribosomal stalk, playing a central role in the interaction of the ribosome with GTP-bound translation factors. The polypeptide is Large ribosomal subunit protein uL10 (Phenylobacterium zucineum (strain HLK1)).